Reading from the N-terminus, the 1344-residue chain is Myb-binding protein 1A (1344 aa).

The tract at residues 1 to 24 (MAEMKSPTKAEPASPAEAPQGDRR) is disordered. The residue at position 2 (Ala-2) is an N-acetylalanine. Residues 2-580 (AEMKSPTKAE…WDQMMSTLKE (579 aa)) are interaction with MYB. The residue at position 14 (Ser-14) is a Phosphoserine. 2 positions are modified to N6-acetyllysine: Lys-69 and Lys-156. Short sequence motifs (nuclear export signal) lie at residues 238 to 256 (SEDN…ANSV) and 261 to 279 (KLPD…ENKF). Disordered stretches follow at residues 696-752 (NEDE…DVDP) and 1150-1344 (PKSE…VQTP). Residues 708–730 (TDEKQLKHGEDADSDSEDSKNSE) are compositionally biased toward basic and acidic residues. Residues 731-746 (SDVDSEDGEESEEEDR) are compositionally biased toward acidic residues. The span at 1150–1161 (PKSEKKNVKDIP) shows a compositional bias: basic and acidic residues. Lys-1151 is covalently cross-linked (Glycyl lysine isopeptide (Lys-Gly) (interchain with G-Cter in SUMO2)). Residues 1154–1344 (KKNVKDIPSD…RVARRRVQTP (191 aa)) are required for nuclear and nucleolar localization. Ser-1162 and Ser-1166 each carry phosphoserine. A compositionally biased stretch (basic residues) spans 1170-1187 (TKRKKKGFLPETKKRKKL). Ser-1189 bears the Phosphoserine mark. Phosphothreonine is present on Thr-1193. Residues Ser-1221 and Ser-1246 each carry the phosphoserine modification. Over residues 1247-1256 (PAPNNPTLSP) the composition is skewed to low complexity. Thr-1253 is modified (phosphothreonine). The residue at position 1255 (Ser-1255) is a Phosphoserine. 2 positions are modified to phosphothreonine: Thr-1258 and Thr-1280. Phosphoserine is present on residues Ser-1283, Ser-1305, and Ser-1318. Basic residues predominate over residues 1301–1316 (VKRRSSQSALPKKRAR). Low complexity predominate over residues 1317–1329 (LSLVSRSPSLLQS). Arg-1322 bears the Citrulline mark. A phosphoserine mark is found at Ser-1323, Ser-1325, and Ser-1329. Positions 1331-1344 (IRKRRVARRRVQTP) are enriched in basic residues.

Belongs to the MYBBP1A family. In terms of assembly, binds to and represses JUN and MYB via the leucine zipper regions present in these proteins. Also binds to and represses PPARGC1A: this interaction is abrogated when PPARGC1A is phosphorylated by MAPK1/ERK. Binds to and stimulates transcription by AHR. Binds to KPNA2. Component of the B-WICH complex, at least composed of SMARCA5/SNF2H, BAZ1B/WSTF, SF3B1, DEK, MYO1C, ERCC6, MYBBP1A and DDX21. Interacts with CLOCK and CRY1. Citrullinated by PADI4.

Its subcellular location is the nucleus. It is found in the nucleolus. It localises to the cytoplasm. In terms of biological role, may activate or repress transcription via interactions with sequence specific DNA-binding proteins. Repression may be mediated at least in part by histone deacetylase activity (HDAC activity). Acts as a corepressor and in concert with CRY1, represses the transcription of the core circadian clock component PER2. Preferentially binds to dimethylated histone H3 'Lys-9' (H3K9me2) on the PER2 promoter. Has a role in rRNA biogenesis together with PWP1. This Rattus norvegicus (Rat) protein is Myb-binding protein 1A (Mybbp1a).